Consider the following 189-residue polypeptide: Rho-related protein racM (189 aa).

12-19 serves as a coordination point for GTP; sequence GDYGVGKT. An Effector region motif is present at residues 35 to 43; it reads YVPTALDNF. Residues 60 to 64 and 118 to 121 contribute to the GTP site; these read DTAGG and TKID. Cys-186 carries the post-translational modification Cysteine methyl ester. A lipid anchor (S-geranylgeranyl cysteine) is attached at Cys-186. Residues 187 to 189 constitute a propeptide, removed in mature form; the sequence is IIL.

Belongs to the small GTPase superfamily. Rho family.

Its subcellular location is the cell membrane. The protein is Rho-related protein racM (racM) of Dictyostelium discoideum (Social amoeba).